Reading from the N-terminus, the 63-residue chain is ATP synthase F(0) complex subunit 8 (63 aa).

Residues 8-24 (TWLLTILSMLLTLFVLF) form a helical membrane-spanning segment. Position 57 is an N6-acetyllysine (K57).

This sequence belongs to the ATPase protein 8 family. In terms of assembly, component of the ATP synthase complex composed at least of ATP5F1A/subunit alpha, ATP5F1B/subunit beta, ATP5MC1/subunit c (homooctomer), MT-ATP6/subunit a, MT-ATP8/subunit 8, ATP5ME/subunit e, ATP5MF/subunit f, ATP5MG/subunit g, ATP5MK/subunit k, ATP5MJ/subunit j, ATP5F1C/subunit gamma, ATP5F1D/subunit delta, ATP5F1E/subunit epsilon, ATP5PF/subunit F6, ATP5PB/subunit b, ATP5PD/subunit d, ATP5PO/subunit OSCP. ATP synthase complex consists of a soluble F(1) head domain (subunits alpha(3) and beta(3)) - the catalytic core - and a membrane F(0) domain - the membrane proton channel (subunits c, a, 8, e, f, g, k and j). These two domains are linked by a central stalk (subunits gamma, delta, and epsilon) rotating inside the F1 region and a stationary peripheral stalk (subunits F6, b, d, and OSCP). Interacts with PRICKLE3.

Its subcellular location is the mitochondrion membrane. Its function is as follows. Subunit 8, of the mitochondrial membrane ATP synthase complex (F(1)F(0) ATP synthase or Complex V) that produces ATP from ADP in the presence of a proton gradient across the membrane which is generated by electron transport complexes of the respiratory chain. ATP synthase complex consist of a soluble F(1) head domain - the catalytic core - and a membrane F(1) domain - the membrane proton channel. These two domains are linked by a central stalk rotating inside the F(1) region and a stationary peripheral stalk. During catalysis, ATP synthesis in the catalytic domain of F(1) is coupled via a rotary mechanism of the central stalk subunits to proton translocation. In vivo, can only synthesize ATP although its ATP hydrolase activity can be activated artificially in vitro. Part of the complex F(0) domain. The protein is ATP synthase F(0) complex subunit 8 of Balaenoptera musculus (Blue whale).